Reading from the N-terminus, the 142-residue chain is Putative pre-16S rRNA nuclease (142 aa).

This sequence belongs to the YqgF nuclease family.

The protein localises to the cytoplasm. Functionally, could be a nuclease involved in processing of the 5'-end of pre-16S rRNA. The protein is Putative pre-16S rRNA nuclease of Shouchella clausii (strain KSM-K16) (Alkalihalobacillus clausii).